The primary structure comprises 294 residues: Picrinine-N-methytransferase TMT2 (294 aa).

The segment at 75-84 is SAM motif I; it reads LLDVGCGLGG. The Vacuolar targeting signal motif lies at 137–143; sequence DGEFDVV. An SAM motif II region spans residues 138–146; the sequence is GEFDVVFTL. Residues 165–174 form an SAM motif III region; the sequence is VGSPGAAIVV.

This sequence belongs to the class I-like SAM-binding methyltransferase superfamily. gTMT family. Homodimer.

The protein resides in the vacuole membrane. It carries out the reaction picrinine + S-adenosyl-L-methionine = ervincine + S-adenosyl-L-homocysteine + H(+). Its pathway is alkaloid biosynthesis; vindoline biosynthesis. S-adenosyl-L-methionine-dependent N-methyltransferase involved in the biosynthesis of biologically active monoterpenoid indole alkaloids (MIAs) natural products including vindoline. Catalyzes the conversion of picrinine to N-methylpicrinine (ervincine). The protein is Picrinine-N-methytransferase TMT2 of Catharanthus roseus (Madagascar periwinkle).